The sequence spans 338 residues: Ketol-acid reductoisomerase (NADP(+)) (338 aa).

The KARI N-terminal Rossmann domain maps to 1–181; the sequence is MKVYYDKDAD…GGGKAGIIET (181 aa). Residues 24–27, R47, and S52 contribute to the NADP(+) site; that span reads YGSQ. Residue H107 is part of the active site. Position 133 (G133) interacts with NADP(+). The KARI C-terminal knotted domain occupies 182-327; sequence NFREETETDL…EKLRAMMPWI (146 aa). Mg(2+) is bound by residues D190, E194, E226, and E230. S251 contributes to the substrate binding site.

Belongs to the ketol-acid reductoisomerase family. The cofactor is Mg(2+).

It carries out the reaction (2R)-2,3-dihydroxy-3-methylbutanoate + NADP(+) = (2S)-2-acetolactate + NADPH + H(+). The enzyme catalyses (2R,3R)-2,3-dihydroxy-3-methylpentanoate + NADP(+) = (S)-2-ethyl-2-hydroxy-3-oxobutanoate + NADPH + H(+). It participates in amino-acid biosynthesis; L-isoleucine biosynthesis; L-isoleucine from 2-oxobutanoate: step 2/4. Its pathway is amino-acid biosynthesis; L-valine biosynthesis; L-valine from pyruvate: step 2/4. Involved in the biosynthesis of branched-chain amino acids (BCAA). Catalyzes an alkyl-migration followed by a ketol-acid reduction of (S)-2-acetolactate (S2AL) to yield (R)-2,3-dihydroxy-isovalerate. In the isomerase reaction, S2AL is rearranged via a Mg-dependent methyl migration to produce 3-hydroxy-3-methyl-2-ketobutyrate (HMKB). In the reductase reaction, this 2-ketoacid undergoes a metal-dependent reduction by NADPH to yield (R)-2,3-dihydroxy-isovalerate. This is Ketol-acid reductoisomerase (NADP(+)) from Variovorax paradoxus (strain S110).